The primary structure comprises 220 residues: Probable GTP-binding protein EngB (220 aa).

The EngB-type G domain occupies S23–I199. Mg(2+) contacts are provided by S38 and T60.

The protein belongs to the TRAFAC class TrmE-Era-EngA-EngB-Septin-like GTPase superfamily. EngB GTPase family. Requires Mg(2+) as cofactor.

Functionally, necessary for normal cell division and for the maintenance of normal septation. The protein is Probable GTP-binding protein EngB of Dechloromonas aromatica (strain RCB).